The chain runs to 97 residues: Citrate lyase acyl carrier protein (97 aa).

S14 bears the O-(phosphoribosyl dephospho-coenzyme A)serine mark.

The protein belongs to the CitD family. As to quaternary structure, oligomer with a subunit composition of (alpha,beta,gamma)6.

The protein localises to the cytoplasm. Its function is as follows. Covalent carrier of the coenzyme of citrate lyase. The sequence is that of Citrate lyase acyl carrier protein from Leuconostoc citreum (strain KM20).